Reading from the N-terminus, the 302-residue chain is Mediator of RNA polymerase II transcription subunit 4 (302 aa).

The stretch at 98-145 (QLHANVEKIIAINDDLKSKIEELDRHRRLGENIKELEAESSNLDNTSK) forms a coiled coil. A disordered region spans residues 239-302 (GTTEEEKIQE…LFDSEDEFSD (64 aa)). Over residues 242–265 (EEEKIQEKKDEQVKKADKQQDTGI) the composition is skewed to basic and acidic residues. Residues 268 to 278 (GSFGDYGSSSS) are compositionally biased toward low complexity. Residues 292-302 (DLFDSEDEFSD) show a composition bias toward acidic residues.

The protein belongs to the Mediator complex subunit 4 family. As to quaternary structure, component of the Mediator complex.

It localises to the nucleus. Its function is as follows. Component of the Mediator complex, a coactivator involved in the regulated transcription of nearly all RNA polymerase II-dependent genes. Mediator functions as a bridge to convey information from gene-specific regulatory proteins to the basal RNA polymerase II transcription machinery. Mediator is recruited to promoters by direct interactions with regulatory proteins and serves as a scaffold for the assembly of a functional preinitiation complex with RNA polymerase II and the general transcription factors. This chain is Mediator of RNA polymerase II transcription subunit 4 (MED4), found in Scheffersomyces stipitis (strain ATCC 58785 / CBS 6054 / NBRC 10063 / NRRL Y-11545) (Yeast).